Consider the following 329-residue polypeptide: DNA-directed RNA polymerase subunit alpha (329 aa).

Residues 1 to 235 are alpha N-terminal domain (alpha-NTD); sequence MQGSVTEFLK…EQLEAFVDLR (235 aa). Residues 249–329 are alpha C-terminal domain (alpha-CTD); that stretch reads FDPILLRPVD…NWPPASIADE (81 aa).

It belongs to the RNA polymerase alpha chain family. In terms of assembly, homodimer. The RNAP catalytic core consists of 2 alpha, 1 beta, 1 beta' and 1 omega subunit. When a sigma factor is associated with the core the holoenzyme is formed, which can initiate transcription.

It carries out the reaction RNA(n) + a ribonucleoside 5'-triphosphate = RNA(n+1) + diphosphate. DNA-dependent RNA polymerase catalyzes the transcription of DNA into RNA using the four ribonucleoside triphosphates as substrates. In Yersinia pestis bv. Antiqua (strain Antiqua), this protein is DNA-directed RNA polymerase subunit alpha.